Here is a 122-residue protein sequence, read N- to C-terminus: MASVYENSYMIVLIFLLLGILLPVVALTLGRMLRPNKPSAAKATTYESGIEPFHDANIRFHARYYIFALLFVIFDVETLFLYPWAVAYDDLGLFALIEMLIFVVMLLVGLAYAWKKKVLQWL.

The next 3 membrane-spanning stretches (helical) occupy residues 10–30, 66–86, and 91–111; these read MIVL…LTLG, IFAL…PWAV, and LGLF…VGLA.

This sequence belongs to the complex I subunit 3 family. As to quaternary structure, NDH-1 is composed of 14 different subunits. Subunits NuoA, H, J, K, L, M, N constitute the membrane sector of the complex.

The protein localises to the cell membrane. The catalysed reaction is a quinone + NADH + 5 H(+)(in) = a quinol + NAD(+) + 4 H(+)(out). Its function is as follows. NDH-1 shuttles electrons from NADH, via FMN and iron-sulfur (Fe-S) centers, to quinones in the respiratory chain. The immediate electron acceptor for the enzyme in this species is believed to be a menaquinone. Couples the redox reaction to proton translocation (for every two electrons transferred, four hydrogen ions are translocated across the cytoplasmic membrane), and thus conserves the redox energy in a proton gradient. This Bacillus thuringiensis subsp. konkukian (strain 97-27) protein is NADH-quinone oxidoreductase subunit A.